The primary structure comprises 1089 residues: Translocase of chloroplast 120, chloroplastic (1089 aa).

Glycine 2 is subject to N-acetylglycine. Disordered regions lie at residues 158–179 (ATEDVNLENGNTHSSSENGVVS), 255–339 (TLSP…GLGR), and 353–381 (QPRVNGNVSHNQPQQAEDSTTAETDEHDE). Polar residues predominate over residues 165 to 176 (ENGNTHSSSENG). Phosphoserine occurs at positions 179, 263, and 283. Basic and acidic residues predominate over residues 300 to 312 (EIKESQHMERESE). The segment covering 327 to 339 (AALPPARPAGLGR) has biased composition (low complexity). Residues 353 to 374 (QPRVNGNVSHNQPQQAEDSTTA) are compositionally biased toward polar residues. An AIG1-type G domain is found at 454-683 (DFSCTIMVLG…KLQDNIPGGQ (230 aa)). The interval 463 to 470 (GKSGVGKS) is G1. GTP is bound by residues 466-471 (GVGKSA) and 485-490 (DAFQVG). Serine 470 is a binding site for Mg(2+). Positions 485 to 488 (DAFQ) are homodimerization. The tract at residues 489 to 493 (VGTKK) is G2. The tract at residues 510–513 (DTPG) is G3. The tract at residues 548 to 553 (RLDMQS) is homodimerization. A G4 region spans residues 582-585 (THAA). GTP is bound by residues histidine 583 and 631–632 (EN). Positions 631–633 (ENH) are G5. Residues 710–748 (PEQQYDDEDDEDDLDESSDSEEESEYDELPPFKRLTKAE) form a disordered region. The segment covering 713 to 737 (QYDDEDDEDDLDESSDSEEESEYDE) has biased composition (acidic residues). A coiled-coil region spans residues 767–788 (REKLFMKRQMKEERKRRKLLKK). The helical transmembrane segment at 1064 to 1080 (LAVVALVPLFKKLLTYY) threads the bilayer.

It belongs to the TRAFAC class TrmE-Era-EngA-EngB-Septin-like GTPase superfamily. AIG1/Toc34/Toc159-like paraseptin GTPase family. TOC159 subfamily. In terms of assembly, homodimer. Part of the TOC core complex that includes 1 protein for the specific recognition of transit peptides surrounded by a ring composed of four proteins forming translocation channels, and four to five GTP-binding proteins providing energy. This core complex can interact with components of the TIC complex to form a larger import complex. Chloroplastic protein precursor such as prSS (precursor of the RuBisCO small subunit) interacts with these complexes. The TOC complex contains a specific subset of polar lipids such as digalactosyldiacylglyceride (DGDG), phosphatidylcholine (PC) and phosphatidylglycerol (PG). The cofactor is Mg(2+). In terms of processing, phosphorylated by KOC1. As to expression, expressed in seedlings, flowers, and roots.

The protein localises to the plastid. The protein resides in the chloroplast outer membrane. It is found in the cytoplasm. Functionally, GTPase involved in protein precursor import into chloroplasts. Seems to recognize chloroplast-destined precursor proteins and regulate their presentation to the translocation channel through GTP hydrolysis. Probably specialized in the import of nuclear encoded non-photosynthetic preproteins from the cytoplasm to the chloroplast. This is Translocase of chloroplast 120, chloroplastic from Arabidopsis thaliana (Mouse-ear cress).